Consider the following 751-residue polypeptide: Putative tyrosine-protein kinase EpsB (751 aa).

The Cytoplasmic portion of the chain corresponds to 1–31 (MTQNLSQPPAVNAPESELDLVRYLDVLVANR). Residues 32–52 (WLIAGIAAVVMLLGATYAFLA) traverse the membrane as a helical segment. Topologically, residues 53–444 (RPVYEADVLV…VPEEPVKPKK (392 aa)) are periplasmic. Residues 445–465 (LTVTALAGVLGVVLGVVAAFV) traverse the membrane as a helical segment. The Cytoplasmic segment spans residues 466-751 (RNTLFGGITE…PSAEAEAESA (286 aa)).

This sequence belongs to the etk/wzc family.

Its subcellular location is the cell inner membrane. The enzyme catalyses L-tyrosyl-[protein] + ATP = O-phospho-L-tyrosyl-[protein] + ADP + H(+). In terms of biological role, probably involved in polymerization and/or export of exopolysaccharide EPS I which functions as a virulence factor. May be involved in an ATP-dependent process in the pathway for EPS I production, possibly export of the trimeric repeat units across the inner membrane or their polymerization. The polypeptide is Putative tyrosine-protein kinase EpsB (epsB) (Ralstonia nicotianae (strain ATCC BAA-1114 / GMI1000) (Ralstonia solanacearum)).